The primary structure comprises 253 residues: tRNA pseudouridine synthase A (253 aa).

The active-site Nucleophile is aspartate 53. Residue tyrosine 111 coordinates substrate.

The protein belongs to the tRNA pseudouridine synthase TruA family. Homodimer.

It catalyses the reaction uridine(38/39/40) in tRNA = pseudouridine(38/39/40) in tRNA. Formation of pseudouridine at positions 38, 39 and 40 in the anticodon stem and loop of transfer RNAs. The sequence is that of tRNA pseudouridine synthase A from Oceanobacillus iheyensis (strain DSM 14371 / CIP 107618 / JCM 11309 / KCTC 3954 / HTE831).